The primary structure comprises 1025 residues: Multidrug resistance protein MdtC (1025 aa).

12 consecutive transmembrane segments (helical) span residues 16 to 36 (LLTL…PVAP), 333 to 353 (EVEQ…FVFL), 360 to 380 (LIPA…MYLC), 387 to 407 (LSLM…IVVL), 431 to 451 (VGFT…PLLM), 459 to 479 (FFAE…FVSV), 528 to 548 (WVLL…ISIP), 853 to 873 (LWLM…LYES), 875 to 895 (VHPL…LLAL), 897 to 917 (LFDT…IGIV), 953 to 973 (PILM…LTSG), and 984 to 1004 (ITIA…TPVV).

The protein belongs to the resistance-nodulation-cell division (RND) (TC 2.A.6) family. MdtC subfamily. Part of a tripartite efflux system composed of MdtA, MdtB and MdtC. MdtC forms a heteromultimer with MdtB.

The protein localises to the cell inner membrane. The polypeptide is Multidrug resistance protein MdtC (Pantoea ananatis (strain AJ13355)).